A 496-amino-acid chain; its full sequence is Aspartyl/glutamyl-tRNA(Asn/Gln) amidotransferase subunit B (496 aa).

It belongs to the GatB/GatE family. GatB subfamily. In terms of assembly, heterotrimer of A, B and C subunits.

It carries out the reaction L-glutamyl-tRNA(Gln) + L-glutamine + ATP + H2O = L-glutaminyl-tRNA(Gln) + L-glutamate + ADP + phosphate + H(+). The catalysed reaction is L-aspartyl-tRNA(Asn) + L-glutamine + ATP + H2O = L-asparaginyl-tRNA(Asn) + L-glutamate + ADP + phosphate + 2 H(+). Allows the formation of correctly charged Asn-tRNA(Asn) or Gln-tRNA(Gln) through the transamidation of misacylated Asp-tRNA(Asn) or Glu-tRNA(Gln) in organisms which lack either or both of asparaginyl-tRNA or glutaminyl-tRNA synthetases. The reaction takes place in the presence of glutamine and ATP through an activated phospho-Asp-tRNA(Asn) or phospho-Glu-tRNA(Gln). The chain is Aspartyl/glutamyl-tRNA(Asn/Gln) amidotransferase subunit B from Picosynechococcus sp. (strain ATCC 27264 / PCC 7002 / PR-6) (Agmenellum quadruplicatum).